The sequence spans 264 residues: MADNDFLSGEAIMVFKKEILDSHSDFTRSLSHQSASPEAYDQENVFSQDFQPFMKQDKETQNSASQPTSEQSLANRDPCTVPDDLREEMMRQRRKEDAFKTALCDAYKRSQACSYGDQCRFAHGVHELRLPMNPRGRNHPKYKTVLCDKFSMTGNCKYGTRCQFIHKIVDGNAAKLASGAHANTSSKSPARNAAAHNHSLFVPQGSTDRSMDLNQSLPIRQSDLVRAFARATRLDVSGYNSTAQLAQYFESQFQRIQQLSSHHH.

Positions 56 to 82 (QDKETQNSASQPTSEQSLANRDPCTVP) are disordered. Polar residues predominate over residues 61–74 (QNSASQPTSEQSLA). 2 consecutive C3H1-type zinc fingers follow at residues 98 to 126 (AFKTALCDAYKRSQACSYGDQCRFAHGVH) and 141 to 169 (KYKTVLCDKFSMTGNCKYGTRCQFIHKIV). Zn(2+) is bound by residues Cys104, Cys113, Cys119, His123, Cys147, Cys156, Cys162, and His166.

As to quaternary structure, monomer.

The protein localises to the cytoplasm. RNA-binding protein that coordinates cell fate specification and differentiation during early embryogenesis. Binds to a consensus pos-1 recognition element (PRE) consisting of the sequence 5'-UA(U 2-3)RGD(N 1-3)G-3', where R is any purine, D is A, G, or U, and N is any base. The PRE motif is found within the 3' untranslated region of many maternal transcripts required for early development. Binds to the 3' untranslated region (UTR) of Notch receptor homolog glp-1, thereby repressing glp-1 translation in the posterior blastomeres in the embryo. Binding to glp-1 3' UTR excludes cell fate regulator gld-1 binding to an overlapping binding site in the glp-1 3' UTR. Binds to the neg-1 3'UTR thereby opposing neg-1 expression and cytoplasmic polyadenylation of the neg-1 mRNA poly(A) tail promoted by gld-2 and gld-3. By inhibiting the cytoplasmic lengthening of neg-1 mRNA, restricts the accumulation of neg-1 protein and promotes endo-mesoderm development in anterior blastomeres. Essential for germline specification. In Caenorhabditis elegans, this protein is RNA-binding protein pos-1.